Consider the following 164-residue polypeptide: ATP synthase subunit b (164 aa).

The chain crosses the membrane as a helical span at residues 5-25 (IGELIGNFILVAGSFLLLIVL).

It belongs to the ATPase B chain family. As to quaternary structure, F-type ATPases have 2 components, F(1) - the catalytic core - and F(0) - the membrane proton channel. F(1) has five subunits: alpha(3), beta(3), gamma(1), delta(1), epsilon(1). F(0) has three main subunits: a(1), b(2) and c(10-14). The alpha and beta chains form an alternating ring which encloses part of the gamma chain. F(1) is attached to F(0) by a central stalk formed by the gamma and epsilon chains, while a peripheral stalk is formed by the delta and b chains.

It localises to the cell membrane. F(1)F(0) ATP synthase produces ATP from ADP in the presence of a proton or sodium gradient. F-type ATPases consist of two structural domains, F(1) containing the extramembraneous catalytic core and F(0) containing the membrane proton channel, linked together by a central stalk and a peripheral stalk. During catalysis, ATP synthesis in the catalytic domain of F(1) is coupled via a rotary mechanism of the central stalk subunits to proton translocation. In terms of biological role, component of the F(0) channel, it forms part of the peripheral stalk, linking F(1) to F(0). The chain is ATP synthase subunit b from Streptococcus gordonii (strain Challis / ATCC 35105 / BCRC 15272 / CH1 / DL1 / V288).